The primary structure comprises 131 residues: Small ribosomal subunit protein uS8 (131 aa).

The protein belongs to the universal ribosomal protein uS8 family. As to quaternary structure, part of the 30S ribosomal subunit. Contacts proteins S5 and S12.

One of the primary rRNA binding proteins, it binds directly to 16S rRNA central domain where it helps coordinate assembly of the platform of the 30S subunit. This chain is Small ribosomal subunit protein uS8, found in Clostridium novyi (strain NT).